Consider the following 358-residue polypeptide: Mitogen-activated protein kinase hog-1 (358 aa).

The region spanning tyrosine 20–leucine 299 is the Protein kinase domain. ATP contacts are provided by residues valine 26–valine 34 and lysine 49. Aspartate 141 functions as the Proton acceptor in the catalytic mechanism. Threonine 171 bears the Phosphothreonine mark. Positions threonine 171–tyrosine 173 match the TXY motif. At tyrosine 173 the chain carries Phosphotyrosine.

It belongs to the protein kinase superfamily. Ser/Thr protein kinase family. MAP kinase subfamily. HOG1 sub-subfamily. Mg(2+) serves as cofactor. Post-translationally, dually phosphorylated on Thr-171 and Tyr-173, which activates the enzyme. Phosphorylation is induced by fungicides and osmotic stress.

The protein resides in the cytoplasm. It localises to the nucleus. The enzyme catalyses L-seryl-[protein] + ATP = O-phospho-L-seryl-[protein] + ADP + H(+). It catalyses the reaction L-threonyl-[protein] + ATP = O-phospho-L-threonyl-[protein] + ADP + H(+). Its activity is regulated as follows. Activated by tyrosine and threonine phosphorylation. Proline-directed serine/threonine-protein kinase involved in a signal transduction pathway that is activated by changes in the osmolarity of the extracellular environment. Controls osmotic regulation of transcription of target genes. Involved in ion flux-mediated turgor regulation. This Neurospora crassa (strain ATCC 24698 / 74-OR23-1A / CBS 708.71 / DSM 1257 / FGSC 987) protein is Mitogen-activated protein kinase hog-1 (hog-1).